The chain runs to 550 residues: Chaperonin GroEL (550 aa).

ATP is bound by residues 30 to 33 (TLGP), lysine 51, 87 to 91 (DGTTT), glycine 415, 481 to 483 (NAA), and aspartate 497.

This sequence belongs to the chaperonin (HSP60) family. In terms of assembly, forms a cylinder of 14 subunits composed of two heptameric rings stacked back-to-back. Interacts with the co-chaperonin GroES.

Its subcellular location is the cytoplasm. It catalyses the reaction ATP + H2O + a folded polypeptide = ADP + phosphate + an unfolded polypeptide.. Together with its co-chaperonin GroES, plays an essential role in assisting protein folding. The GroEL-GroES system forms a nano-cage that allows encapsulation of the non-native substrate proteins and provides a physical environment optimized to promote and accelerate protein folding. The sequence is that of Chaperonin GroEL from Photobacterium profundum (strain SS9).